Here is a 122-residue protein sequence, read N- to C-terminus: Protein YqjC (122 aa).

Positions 1 to 20 are cleaved as a signal peptide; that stretch reads MKYRIALAVSLFALSAGSYA. The disordered stretch occupies residues 65–100; sequence QLRADHQKKIAKQKDEVAERQQDLAEAKQKGDADKI. The segment covering 66–100 has biased composition (basic and acidic residues); that stretch reads LRADHQKKIAKQKDEVAERQQDLAEAKQKGDADKI.

The sequence is that of Protein YqjC (yqjC) from Escherichia coli (strain K12).